A 295-amino-acid polypeptide reads, in one-letter code: Protease Rv3090 (295 aa).

Transmembrane regions (helical) follow at residues Thr2–Trp22 and Val37–Val57.

It localises to the cell membrane. It is found in the secreted. The protein localises to the cell wall. Protease that triggers late cell apoptosis and contributes to the pathogenicity and dissemination of M.tuberculosis. In a mouse model of infection, can induce hepatocyte and lung cell apoptosis and cause pathological damage to the spleen, liver and lungs. Specifically stimulates the secretion of inflammatory cytokines including TNF-alpha, IL-6 and IL-1 beta. Can degrade casein in vitro. This Mycobacterium tuberculosis (strain ATCC 25618 / H37Rv) protein is Protease Rv3090.